A 241-amino-acid chain; its full sequence is ATP synthase subunit a (241 aa).

The next 5 membrane-spanning stretches (helical) occupy residues 30–50 (GQVF…VVIG), 91–111 (FIGT…LVPW), 128–148 (INTT…AGLS), 193–213 (LVVA…VMFL), and 214–234 (GLFT…YYIG).

Belongs to the ATPase A chain family. F-type ATPases have 2 components, CF(1) - the catalytic core - and CF(0) - the membrane proton channel. CF(1) has five subunits: alpha(3), beta(3), gamma(1), delta(1), epsilon(1). CF(0) has four main subunits: a, b, b' and c.

The protein localises to the cellular thylakoid membrane. Functionally, key component of the proton channel; it plays a direct role in the translocation of protons across the membrane. The polypeptide is ATP synthase subunit a (Prochlorococcus marinus (strain NATL1A)).